The sequence spans 149 residues: uncharacterized protein (149 aa).

This is an uncharacterized protein from Acidithiobacillus ferridurans.